We begin with the raw amino-acid sequence, 283 residues long: MGASVSRGRAARVPAPEPEPEEALDLSQLPPELLLVVLSHVPPRTLLGRCRQVCRGWRALVDGQALWLLILARDHGATGRALLHLARSCQSPARNARPCPLGRFCARRPIGRNLIRNPCGQEGLRKWMVQHGGDGWVVEENRTTVPGAPSQTCFVTSFSWCCKKQVLDLEEEGLWPELLDSGRIEICVSDWWGARHDSGCMYRLLVQLLDANQTVLDKFSAVPDPIPQWNNNACLHVTHVFSNIKMGVRFVSFEHRGQDTQFWAGHYGARVTNSSVIVRVRLS.

Residues 1–23 form a disordered region; that stretch reads MGASVSRGRAARVPAPEPEPEEA. The region spanning 23 to 70 is the F-box domain; the sequence is ALDLSQLPPELLLVVLSHVPPRTLLGRCRQVCRGWRALVDGQALWLLI. Residues 104–280 enclose the FBA domain; that stretch reads FCARRPIGRN…VTNSSVIVRV (177 aa).

In terms of assembly, part of a SCF (SKP1-cullin-F-box) protein ligase complex. Interacts with SKP1 and CUL1. Predominantly expressed in brain, heart and kidney. Expressed at lower levels in liver and lung.

Functionally, substrate-recognition component of the SCF (SKP1-CUL1-F-box protein)-type E3 ubiquitin ligase complex. Able to recognize and bind denatured glycoproteins, which are modified with complex-type oligosaccharides. The chain is F-box only protein 27 (FBXO27) from Homo sapiens (Human).